The chain runs to 306 residues: Probable rRNA-processing protein EBP2 (306 aa).

N-acetylmethionine is present on M1. Disordered stretches follow at residues 1–20 (MDTP…LASD), 75–103 (GPVP…DDFQ), and 150–169 (IRQK…KAKQ). At T3 the chain carries Phosphothreonine. Phosphoserine is present on residues S7, S9, S11, and S13. Positions 81-90 (SETQPTPQNQ) are enriched in polar residues. Basic and acidic residues predominate over residues 91-103 (DQKKGVNPEDDFQ). A Glycyl lysine isopeptide (Lys-Gly) (interchain with G-Cter in SUMO2) cross-link involves residue K93. Positions 135-171 (DYFAEMAKSDQQMQKIRQKLQTKQAAMEKSEKAKQLR) form a coiled coil. Glycyl lysine isopeptide (Lys-Gly) (interchain with G-Cter in SUMO2) cross-links involve residues K179 and K218. The segment covering 213–224 (LEGDQKPVERSA) has biased composition (basic and acidic residues). The tract at residues 213 to 306 (LEGDQKPVER…ARQKLKSKAR (94 aa)) is disordered. A phosphoserine mark is found at S264 and S270. The span at 274–306 (KVAHGKGSRRPGKKGANKRPGKRARQKLKSKAR) shows a compositional bias: basic residues.

The protein belongs to the EBP2 family. In terms of assembly, interacts with WDR46.

The protein resides in the nucleus. It is found in the nucleolus. Functionally, required for the processing of the 27S pre-rRNA. This chain is Probable rRNA-processing protein EBP2 (Ebna1bp2), found in Mus musculus (Mouse).